We begin with the raw amino-acid sequence, 381 residues long: L-lactate dehydrogenase (381 aa).

Residues 1–380 form the FMN hydroxy acid dehydrogenase domain; that stretch reads MIISASTDYR…TRDSLVRELG (380 aa). Tyrosine 24 contacts substrate. The FMN site is built by serine 106 and glutamine 127. Substrate is bound at residue tyrosine 129. Threonine 155 is an FMN binding site. Arginine 164 is a binding site for substrate. Lysine 251 provides a ligand contact to FMN. Histidine 275 functions as the Proton acceptor in the catalytic mechanism. Arginine 278 provides a ligand contact to substrate. 306–330 serves as a coordination point for FMN; it reads DSGIRSGLDVVRMIALGADTVLIGR.

Belongs to the FMN-dependent alpha-hydroxy acid dehydrogenase family. In terms of assembly, homotetramer. FMN serves as cofactor.

The protein resides in the cell inner membrane. The enzyme catalyses (S)-lactate + A = pyruvate + AH2. Its function is as follows. Catalyzes the conversion of L-lactate to pyruvate. Is coupled to the respiratory chain. The sequence is that of L-lactate dehydrogenase from Pseudomonas putida (strain ATCC 700007 / DSM 6899 / JCM 31910 / BCRC 17059 / LMG 24140 / F1).